Reading from the N-terminus, the 128-residue chain is Ribonuclease P protein component (128 aa).

The protein belongs to the RnpA family. As to quaternary structure, consists of a catalytic RNA component (M1 or rnpB) and a protein subunit.

It catalyses the reaction Endonucleolytic cleavage of RNA, removing 5'-extranucleotides from tRNA precursor.. Its function is as follows. RNaseP catalyzes the removal of the 5'-leader sequence from pre-tRNA to produce the mature 5'-terminus. It can also cleave other RNA substrates such as 4.5S RNA. The protein component plays an auxiliary but essential role in vivo by binding to the 5'-leader sequence and broadening the substrate specificity of the ribozyme. The chain is Ribonuclease P protein component from Mycoplasma genitalium (strain ATCC 33530 / DSM 19775 / NCTC 10195 / G37) (Mycoplasmoides genitalium).